The sequence spans 475 residues: Ribulose bisphosphate carboxylase large chain (475 aa).

Lysine 14 carries the N6,N6,N6-trimethyllysine modification. 2 residues coordinate substrate: asparagine 123 and threonine 173. Residue lysine 175 is the Proton acceptor of the active site. Position 177 (lysine 177) interacts with substrate. 3 residues coordinate Mg(2+): lysine 201, aspartate 203, and glutamate 204. Lysine 201 is modified (N6-carboxylysine). Residue histidine 294 is the Proton acceptor of the active site. Residues arginine 295, histidine 327, and serine 379 each contribute to the substrate site.

Belongs to the RuBisCO large chain family. Type I subfamily. In terms of assembly, heterohexadecamer of 8 large chains and 8 small chains; disulfide-linked. The disulfide link is formed within the large subunit homodimers. The cofactor is Mg(2+). The disulfide bond which can form in the large chain dimeric partners within the hexadecamer appears to be associated with oxidative stress and protein turnover.

It localises to the plastid. Its subcellular location is the chloroplast. It catalyses the reaction 2 (2R)-3-phosphoglycerate + 2 H(+) = D-ribulose 1,5-bisphosphate + CO2 + H2O. The catalysed reaction is D-ribulose 1,5-bisphosphate + O2 = 2-phosphoglycolate + (2R)-3-phosphoglycerate + 2 H(+). RuBisCO catalyzes two reactions: the carboxylation of D-ribulose 1,5-bisphosphate, the primary event in carbon dioxide fixation, as well as the oxidative fragmentation of the pentose substrate in the photorespiration process. Both reactions occur simultaneously and in competition at the same active site. In Actinidia chinensis (Kiwi), this protein is Ribulose bisphosphate carboxylase large chain.